The chain runs to 162 residues: Peptidyl-prolyl cis-trans isomerase (162 aa).

The region spanning 5-161 (FFDVQFGGDA…TTIKIVDSGV (157 aa)) is the PPIase cyclophilin-type domain.

The protein belongs to the cyclophilin-type PPIase family. PPIase A subfamily.

The enzyme catalyses [protein]-peptidylproline (omega=180) = [protein]-peptidylproline (omega=0). Its activity is regulated as follows. Binds cyclosporin A (CsA). CsA mediates some of its effects via an inhibitory action on PPIase. Its function is as follows. PPIases accelerate the folding of proteins. It catalyzes the cis-trans isomerization of proline imidic peptide bonds in oligopeptides. In Paramecium primaurelia, this protein is Peptidyl-prolyl cis-trans isomerase.